A 528-amino-acid chain; its full sequence is MNSFKWGKKIILFCLIVSLMGGIGVSCSFNKIKDSVKQKIDSMGDKGTYGVSASHPLAVEEGMKVLKNGGSAVDAAIVVSYVLGVVELHASGIGGGGGMLIISKDKETFIDYRETTPYFTGNQKPHIGVPGFVAGMEYIHDNYGSLPMGELLQPAINYAEKGFKVDDSLTMRLDLAKPRIYSDKLSIFYPNGEPIETGETLIQTDLARTLKKIQKEGAKGFYEGGVARAISKTAKISLEDIKGYKVEVRKPVKGNYMGYDVYTAPPPFSGVTLLQMLKLAEKKEVYKDVDHTATYMSKMEEISRIAYQDRKKNLGDPNYVNMDPNKMVSDKYISTMKNENGDALSEAEHESTTHFVIIDRDGTVVSSTNTLSNFFGTGKYTAGFFLNNQLQNFGSEGFNSYEPGKRSRTFMAPTVLKKDGETIGIGSPGGNRIPQILTPILDKYTHGKGSLQDIINEYRFTFEKNTAYTEIQLSSEVKNELSRKGLNVKKKVSPAFFGGVQALIKDERDNVITGAGDGRRNGTWKSNK.

The first 26 residues, 1–26 (MNSFKWGKKIILFCLIVSLMGGIGVS), serve as a signal peptide directing secretion. The active-site Nucleophile is T352. Poly-gamma-D-glutamate is bound by residues T352, 429–432 (GGNR), and R520.

It belongs to the gamma-glutamyltransferase family. As to quaternary structure, this enzyme consists of two polypeptide chains, which are synthesized in precursor form from a single polypeptide. Post-translationally, cleaved by autocatalysis into a large and a small subunit.

The protein operates within capsule biogenesis; capsule polysaccharide biosynthesis. In terms of biological role, transpeptidase that cleaves the poly-gamma-D-glutamate capsule and catalyzes the formation of an amide bond with the side-chain amino group of meso-diaminopimelic acid (m-DAP) in the peptidoglycan scaffold. Degradation of the high-molecular weight capsule (H-capsule) to the lower-molecular weight capsule (L-capsule), which is released from the bacterial cell surface. The production of L-capsule is essential to mediate escape from host defenses. In Bacillus anthracis, this protein is Capsule biosynthesis protein CapD proenzyme (capD).